The following is a 220-amino-acid chain: Adenylate kinase (220 aa).

10 to 15 (GSGKST) contributes to the ATP binding site. The NMP stretch occupies residues 30-59 (SSGDIIRAEISSRTPLGLEMEKYLSRGDLI). AMP is bound by residues Ser-31, Arg-36, 57–59 (DLI), 83–86 (GYPR), and Gln-90. The tract at residues 124–161 (GRRICSKCGAVYHIEFNPPKIPGKCDICGGDLIQRPDD) is LID. Arg-125 serves as a coordination point for ATP. 2 residues coordinate Zn(2+): Cys-128 and Cys-131. 134 to 135 (VY) is a binding site for ATP. Positions 148 and 151 each coordinate Zn(2+). AMP is bound by residues Arg-158 and Arg-169. Gly-197 serves as a coordination point for ATP.

Belongs to the adenylate kinase family. As to quaternary structure, monomer.

The protein resides in the cytoplasm. The enzyme catalyses AMP + ATP = 2 ADP. It participates in purine metabolism; AMP biosynthesis via salvage pathway; AMP from ADP: step 1/1. Functionally, catalyzes the reversible transfer of the terminal phosphate group between ATP and AMP. Plays an important role in cellular energy homeostasis and in adenine nucleotide metabolism. The polypeptide is Adenylate kinase (Pyrococcus horikoshii (strain ATCC 700860 / DSM 12428 / JCM 9974 / NBRC 100139 / OT-3)).